Here is a 160-residue protein sequence, read N- to C-terminus: 6,7-dimethyl-8-ribityllumazine synthase (160 aa).

Residues W26, 58–60 (AIE), and 80–82 (VVI) each bind 5-amino-6-(D-ribitylamino)uracil. Position 85-86 (85-86 (ET)) interacts with (2S)-2-hydroxy-3-oxobutyl phosphate. The active-site Proton donor is H88. A 5-amino-6-(D-ribitylamino)uracil-binding site is contributed by N113. R127 serves as a coordination point for (2S)-2-hydroxy-3-oxobutyl phosphate.

This sequence belongs to the DMRL synthase family. In terms of assembly, homopentamer.

The catalysed reaction is (2S)-2-hydroxy-3-oxobutyl phosphate + 5-amino-6-(D-ribitylamino)uracil = 6,7-dimethyl-8-(1-D-ribityl)lumazine + phosphate + 2 H2O + H(+). The protein operates within cofactor biosynthesis; riboflavin biosynthesis; riboflavin from 2-hydroxy-3-oxobutyl phosphate and 5-amino-6-(D-ribitylamino)uracil: step 1/2. In terms of biological role, catalyzes the formation of 6,7-dimethyl-8-ribityllumazine by condensation of 5-amino-6-(D-ribitylamino)uracil with 3,4-dihydroxy-2-butanone 4-phosphate. This is the penultimate step in the biosynthesis of riboflavin. The sequence is that of 6,7-dimethyl-8-ribityllumazine synthase from Mycobacteroides abscessus (strain ATCC 19977 / DSM 44196 / CCUG 20993 / CIP 104536 / JCM 13569 / NCTC 13031 / TMC 1543 / L948) (Mycobacterium abscessus).